Here is a 344-residue protein sequence, read N- to C-terminus: Selenide, water dikinase (344 aa).

The active site involves U16. Residue U16 is a non-standard amino acid, selenocysteine. ATP is bound by residues K19 and 46–48 (TND). Position 49 (D49) interacts with Mg(2+). Residues D66, D89, and 135–137 (GHT) contribute to the ATP site. Position 89 (D89) interacts with Mg(2+). D223 contacts Mg(2+).

The protein belongs to the selenophosphate synthase 1 family. Class I subfamily. Homodimer. Mg(2+) is required as a cofactor.

The enzyme catalyses hydrogenselenide + ATP + H2O = selenophosphate + AMP + phosphate + 2 H(+). Functionally, synthesizes selenophosphate from selenide and ATP. This is Selenide, water dikinase from Caldanaerobacter subterraneus subsp. tengcongensis (strain DSM 15242 / JCM 11007 / NBRC 100824 / MB4) (Thermoanaerobacter tengcongensis).